The following is a 354-amino-acid chain: MIELIGHETPVPSQQQHTGGVRGTSACTPPGVGERTTVLYCPPPPPERPEVAAEINRRVVVWMQGLGLGGEDNVAGVYKHDPGRGITLCHPGSQDVERMTAAGKMIVAETAVDDYFCETNSRRDANDQTIGPNLSLAQSAIDAPRLTPDLQALWNKCRDDHPVLRAQHEAFGDLERISSPAQAQRVRHDIAQLYLGYNAENGWRLLNRLPPVWQYLANRQMNSFRPCLNLTDALDGYELAPQLYAHPLVQDCTARATLIATLYNDLASCEREIREHGLPFNLPAVIAAEERIALDEAFVRACEIHNELIQALEEATGHAASALADPALSRYLTGLWSWLAGSRHWHFTTARHRA.

The segment at 1–29 is disordered; the sequence is MIELIGHETPVPSQQQHTGGVRGTSACTP. Mg(2+)-binding residues include Asp113, Asp114, Glu118, Asn264, Ser268, and Glu272.

Belongs to the terpene synthase family. 2-methylisoborneol synthase subfamily. Requires Mg(2+) as cofactor.

The catalysed reaction is (E)-2-methylgeranyl diphosphate + H2O = 2-methylisoborneol + diphosphate. Its function is as follows. Catalyzes the cyclization of 2-methylgeranyl diphosphate (2-MeGPP) to 2-methylisoborneol (2-MIB), which likely involves the intermediacy of 2-methyllinalyl diphosphate. The protein is 2-methylisoborneol synthase of Saccharopolyspora erythraea (strain ATCC 11635 / DSM 40517 / JCM 4748 / NBRC 13426 / NCIMB 8594 / NRRL 2338).